The sequence spans 521 residues: Acetylcholine receptor subunit beta-like 1 (521 aa).

The signal sequence occupies residues 1 to 24 (MESSCKSWLLCSILVLVAFSLVSA). The Extracellular portion of the chain corresponds to 25 to 235 (SEDEERLVRD…ITFYIIIRRK (211 aa)). Residue Asn-48 is glycosylated (N-linked (GlcNAc...) asparagine). Cysteines 152 and 166 form a disulfide. The next 3 helical transmembrane spans lie at 236 to 260 (TLFY…VFYL), 268 to 286 (VTLG…LLVS), and 302 to 323 (YLLF…IINW). Residues 324-481 (NFRGPRTHRM…WKYVAMVIDR (158 aa)) lie on the Cytoplasmic side of the membrane. The helical transmembrane segment at 482–500 (LQLYIFFIVTTAGTVGILM) threads the bilayer.

It belongs to the ligand-gated ion channel (TC 1.A.9) family. Acetylcholine receptor (TC 1.A.9.1) subfamily. In terms of tissue distribution, CNS in embryos.

The protein localises to the postsynaptic cell membrane. The protein resides in the cell membrane. After binding acetylcholine, the AChR responds by an extensive change in conformation that affects all subunits and leads to opening of an ion-conducting channel across the plasma membrane. The sequence is that of Acetylcholine receptor subunit beta-like 1 (nAChRbeta1) from Drosophila melanogaster (Fruit fly).